The chain runs to 256 residues: Non-specific lipid transfer protein GPI-anchored 23 (256 aa).

The signal sequence occupies residues 1–21 (MKPSFVLLSIVLLLSSSLSDA). An N-linked (GlcNAc...) asparagine glycan is attached at asparagine 41. Intrachain disulfides connect cysteine 45–cysteine 88, cysteine 55–cysteine 72, cysteine 73–cysteine 113, and cysteine 86–cysteine 121. The tract at residues 125–230 (TPAASTPVSP…SPSPSPSPSI (106 aa)) is disordered. The span at 138-230 (SPTTSPSSAK…SPSPSPSPSI (93 aa)) shows a compositional bias: low complexity. Residue serine 225 is the site of GPI-anchor amidated serine attachment. Positions 226–256 (PSPSISSSGILLVSKLFIAVVMVSSFLYILA) are cleaved as a propeptide — removed in mature form.

Belongs to the plant LTP family. As to expression, confined to the anthers of the inflorescence.

Its subcellular location is the cell membrane. Probable lipid transfer protein. The chain is Non-specific lipid transfer protein GPI-anchored 23 from Arabidopsis thaliana (Mouse-ear cress).